The following is a 452-amino-acid chain: MDTKHQDKPSILMLPWLAHGHIAPHLELAKKLSQKNFHIYFCSTPNNLQSFGRNVEKNFSSSIQLIELQLPNTFPELPSQNQTTKNLPPHLIYTLVGAFEDAKPAFCNILETLKPTLVMYDLFQPWAAEAAYQYDIAAILFLPLSAVACSFLLHNIVNPSLKYPFFESDYQDRESKNINYFLHLTANGTLNKDRFLKAFELSCKFVFIKTSREIESKYLDYFPSLMGNEIIPVGPLIQEPTFKEDDTKIMDWLSQKEPRSVVYASFGSEYFPSKDEIHEIASGLLLSEVNFIWAFRLHPDEKMTIEEALPQGFAEEIERNNKGMIVQGWVPQAKILRHGSIGGFLSHCGWGSVVEGMVFGVPIIGVPMAYEQPSNAKVVVDNGMGMVVPRDKINQRLGGEEVARVIKHVVLQEEAKQIRRKANEISESMKKIGDAEMSVVVEKLLQLVKKSE.

H21 acts as the Proton acceptor in catalysis. H21 is a binding site for an anthocyanidin. D121 acts as the Charge relay in catalysis. A helical transmembrane segment spans residues 136–156 (IAAILFLPLSAVACSFLLHNI). S268, V330, H347, G351, S352, and E355 together coordinate UDP-beta-L-rhamnose. The stretch at 407–436 (KHVVLQEEAKQIRRKANEISESMKKIGDAE) forms a coiled coil.

This sequence belongs to the UDP-glycosyltransferase family. Monomer. In terms of tissue distribution, expressed in young fruits and leaves.

It is found in the membrane. The enzyme catalyses flavanone 7-O-beta-D-glucoside + UDP-beta-L-rhamnose = flavanone 7-O-[alpha-L-rhamnosyl-(1-&gt;2)-beta-D-glucoside] + UDP + H(+). Its function is as follows. Involved in the production of the bitter neohesperidosides in citrus. Shows a strict specificity for UDP-rhamnose as donor. The sequence is that of Flavanone 7-O-glucoside 2''-O-beta-L-rhamnosyltransferase (C12RT1) from Citrus maxima (Pomelo).